We begin with the raw amino-acid sequence, 1267 residues long: Clustered mitochondria protein homolog (1267 aa).

TPR repeat units lie at residues 64 to 102 (YNLK…KPYN), 420 to 453 (YSFV…LNML), 716 to 749 (EAHE…MIKE), 795 to 830 (LVPL…IPAL), 904 to 939 (RSIC…KSRA), 1010 to 1043 (AEKY…YERV), and 1138 to 1171 (AYIK…FTKE). Residues 329-586 (PTNGPDYLRT…NTYPLDVEFA (258 aa)) enclose the Clu domain. The segment covering 1203–1219 (QQDQTAASGLKQQPQKS) has biased composition (polar residues). The segment at 1203–1267 (QQDQTAASGL…KSKSKGKNKK (65 aa)) is disordered. Residues 1224-1239 (NKKETTNPDLADKSVD) are compositionally biased toward basic and acidic residues. The segment covering 1254 to 1267 (KTTKKSKSKGKNKK) has biased composition (basic residues).

This sequence belongs to the CLU family. May associate with the eukaryotic translation initiation factor 3 (eIF-3) complex.

The protein localises to the cytoplasm. MRNA-binding protein involved in proper cytoplasmic distribution of mitochondria. This Candida glabrata (strain ATCC 2001 / BCRC 20586 / JCM 3761 / NBRC 0622 / NRRL Y-65 / CBS 138) (Yeast) protein is Clustered mitochondria protein homolog.